Reading from the N-terminus, the 2443-residue chain is NFX1-type zinc finger-containing protein 1 homolog (2443 aa).

3 disordered regions span residues 212–339, 545–566, and 583–672; these read PHKQ…EGDH, SSDSGRQVLSESRGAGSSNVYG, and HRDN…FVSP. A compositionally biased stretch (low complexity) spans 246–263; sequence ISISNSSPPGLSSVSPIP. Pro residues predominate over residues 275–294; that stretch reads PQPPGLSIPAPPGISLPTPP. Residues 297–310 are compositionally biased toward polar residues; it reads SLQNHQNDQFEQAH. Positions 311-322 are enriched in low complexity; it reads STISRMSENSSS. A compositionally biased stretch (polar residues) spans 545–564; that stretch reads SSDSGRQVLSESRGAGSSNV. Basic and acidic residues-rich tracts occupy residues 601–638 and 662–672; these read GEVHRRLDEQQQQRHEDESSRYRDDSRQSRRADDRRDQ and EHSRDDKFVSP. A UvrD-like helicase ATP-binding domain is found at 1040–1545; sequence MDESQRLAFC…MNLTISDKIV (506 aa). Residue 1061-1068 coordinates ATP; sequence GPPGTGKT. NF-X1-type zinc fingers lie at residues 1769–1791, 1853–1873, 1912–1930, and 2027–2044; these read CGHVCERLCHPNMEEEHLQRCLY, CGHACAAKCGEECTLVSECSQ, CPHKCAEICGQPCTVECME, and CGHTCSAKCGESCPPCKA.

Belongs to the ZNFX1 family. In terms of assembly, interacts with ego-1, csr-1, wago-1 and prg-1. Interacts with wago-4; the interaction promotes the transmission of epigenetic information across generations. As to expression, expressed in germs cells. Not expressed in somatic tissues.

The protein resides in the cytoplasm. It is found in the perinuclear region. It localises to the cytoplasmic granule. The catalysed reaction is ATP + H2O = ADP + phosphate + H(+). Functionally, epigenetic inheritance factor which, in association with the Argonaute protein wago-4, mediates small RNA-directed transgenerational epigenetic inheritance and thus balances the transgenerational inheritance of epigenetic information. Specifically, maintains a balanced production of small RNAs by preventing the spread of epigenetic signals towards the 5'-end of target mRNAs. Plays a role in small RNA-induced gene silencing in the germline. This chain is NFX1-type zinc finger-containing protein 1 homolog, found in Caenorhabditis elegans.